The sequence spans 1212 residues: Periplasmic/secreted acid trehalase ATH1 (1212 aa).

Topologically, residues 1–82 are cytoplasmic; the sequence is MGFKDKILFW…STRVKIRRQN (82 aa). The helical transmembrane segment at 83 to 103 threads the bilayer; it reads ILNTTLILGMLIALVIWTAIL. Residues 104 to 1212 lie on the Periplasmic side of the membrane; the sequence is STNSYFSSSL…ATIREIVLQE (1109 aa). N-linked (GlcNAc...) asparagine glycosylation is found at N243, N275, N296, N362, N414, N428, and N521. 546–547 contacts substrate; sequence WD. N-linked (GlcNAc...) asparagine glycosylation is found at N572, N601, N661, and N671. E677 functions as the Proton donor in the catalytic mechanism. N-linked (GlcNAc...) asparagine glycosylation is found at N729 and N738. 744 to 745 is a binding site for substrate; that stretch reads KQ. N-linked (GlcNAc...) asparagine glycans are attached at residues N912, N938, N993, N1011, N1033, N1052, N1070, N1097, and N1165.

It belongs to the glycosyl hydrolase 65 family. Homodimer.

The protein resides in the secreted. Its subcellular location is the periplasm. It is found in the membrane. It carries out the reaction alpha,alpha-trehalose + H2O = alpha-D-glucose + beta-D-glucose. Its function is as follows. Periplasmic/secreted acid trehalase that catalyzes hydrolysis of the disaccharide trehalose and required for growth on trehalose as carbon source. Growth on trehalose is not restricted to respiration. In Candida glabrata (Yeast), this protein is Periplasmic/secreted acid trehalase ATH1.